A 379-amino-acid chain; its full sequence is Alcohol dehydrogenase 1 (379 aa).

8 residues coordinate Zn(2+): Cys47, Thr49, His69, Cys99, Cys102, Cys105, Cys113, and Cys177. An alcohol-binding residues include Thr49 and His69. NAD(+) is bound at residue Thr49. Residues 202–207, Asp226, Arg231, Thr272, Val295, 295–297, Phe322, and Arg372 each bind NAD(+); these read GLGAVG and VGV.

This sequence belongs to the zinc-containing alcohol dehydrogenase family. Homodimer. Requires Zn(2+) as cofactor.

It localises to the cytoplasm. The catalysed reaction is a primary alcohol + NAD(+) = an aldehyde + NADH + H(+). It catalyses the reaction a secondary alcohol + NAD(+) = a ketone + NADH + H(+). This is Alcohol dehydrogenase 1 (ADH1) from Hordeum vulgare (Barley).